A 389-amino-acid chain; its full sequence is Large ribosomal subunit protein uL3 (389 aa).

The interval 1 to 36 (MSHRKFEHPRHGSLGFLPRKRSSRHRGKVKSFPKDD) is disordered. The span at 18-31 (PRKRSSRHRGKVKS) shows a compositional bias: basic residues.

It belongs to the universal ribosomal protein uL3 family.

It is found in the cytoplasm. The L3 protein is a component of the large subunit of cytoplasmic ribosomes. The sequence is that of Large ribosomal subunit protein uL3 (RPL3) from Oryza sativa subsp. japonica (Rice).